We begin with the raw amino-acid sequence, 531 residues long: Developmental and secondary metabolism regulator VE1 (531 aa).

The Velvet domain maps to 26-220 (NRSLWYQMTV…ADQGCPVRIR (195 aa)). Residues 40–45 (ERARAC) carry the Nuclear localization signal motif. Disordered regions lie at residues 206–435 (LSKT…SQTS) and 447–517 (PVSP…SRAD). The span at 244-253 (FERREEDFGR) shows a compositional bias: basic and acidic residues. The segment covering 295-306 (YPPPPPPPPSYE) has biased composition (pro residues). Residues 348–357 (YAPTSQSPYS) show a composition bias toward polar residues. Residues 381-390 (LKHELYDRRQ) show a composition bias toward basic and acidic residues. Low complexity predominate over residues 391-405 (STSTYVPPSPSVYST). Positions 416 to 427 (SYPPTPVAAPRP) are enriched in pro residues. The interval 430 to 461 (MHSQTSLPALKIDQLVSPVSPLPPIEPQTGPA) is PEST. A compositionally biased stretch (polar residues) spans 479–491 (FAQSTRPLHNGQR).

The protein belongs to the velvet family. VeA subfamily. As to quaternary structure, component of the heterotrimeric velvet complex composed of LAE1, VE1 and VELB; VE1 acting as a bridging protein between LAE1 and VELB. Interacts with VELB and VELC.

It is found in the nucleus. It localises to the cytoplasm. In terms of biological role, component of the velvet transcription factor complex that controls sexual/asexual developmental ratio in response to light, promoting sexual development in the darkness while stimulating asexual sporulation under illumination. The velvet complex hat acts as a global regulator for secondary metabolite gene expression. Controls the expression of the cycotoxins fumonisins and fusarins gene cluster. Involved in cell wall integrity, cell surface hydrophobicity, hyphal polarity and conidiation pattern. Required for pathogenicity against maize seedlings. Involved in oxidative stress resistance by positively regulating the transcription of the catalase-encoding gene CAT2. The chain is Developmental and secondary metabolism regulator VE1 from Gibberella moniliformis (strain M3125 / FGSC 7600) (Maize ear and stalk rot fungus).